The sequence spans 271 residues: Phthiotriol/phenolphthiotriol dimycocerosates methyltransferase 1 (271 aa).

Belongs to the methyltransferase superfamily. Phthiotriol/phenolphthiotriol dimycocerosates methyltransferase family.

Functionally, catalyzes the methylation of the lipid moiety of the intermediate compounds phthiotriol and glycosylated phenolphthiotriol dimycoserosates to form phthiocerol dimycocerosates (DIM A) and glycosylated phenolphthiocerol dimycocerosates (PGL). The polypeptide is Phthiotriol/phenolphthiotriol dimycocerosates methyltransferase 1 (Mycobacterium ulcerans (strain Agy99)).